Reading from the N-terminus, the 341-residue chain is Glyceraldehyde-3-phosphate dehydrogenase (341 aa).

NAD(+)-binding positions include 11 to 12 and G109; that span reads TI. 138–140 serves as a coordination point for D-glyceraldehyde 3-phosphate; that stretch reads SCN. C139 (nucleophile) is an active-site residue. R167 provides a ligand contact to NAD(+). D-glyceraldehyde 3-phosphate-binding positions include T169 and 192 to 193; that span reads HA. Q299 contacts NAD(+).

This sequence belongs to the glyceraldehyde-3-phosphate dehydrogenase family. Homotetramer.

It is found in the cytoplasm. It catalyses the reaction D-glyceraldehyde 3-phosphate + phosphate + NADP(+) = (2R)-3-phospho-glyceroyl phosphate + NADPH + H(+). The catalysed reaction is D-glyceraldehyde 3-phosphate + phosphate + NAD(+) = (2R)-3-phospho-glyceroyl phosphate + NADH + H(+). It functions in the pathway carbohydrate degradation; glycolysis; pyruvate from D-glyceraldehyde 3-phosphate: step 1/5. The polypeptide is Glyceraldehyde-3-phosphate dehydrogenase (Picrophilus torridus (strain ATCC 700027 / DSM 9790 / JCM 10055 / NBRC 100828 / KAW 2/3)).